Consider the following 700-residue polypeptide: Protein kinase C, eye isozyme (700 aa).

2 consecutive Phorbol-ester/DAG-type zinc fingers follow at residues 71–121 and 136–186; these read GHRF…VFKC and KHGW…PPMC. The C2 domain occupies 189–310; that stretch reads DISEVRGKLL…LQKEPVDGWY (122 aa). 6 residues coordinate Ca(2+): Asp-222, Asp-228, Asp-281, Asp-283, Ser-286, and Asp-289. Residues 371–629 form the Protein kinase domain; that stretch reads FNFVKVIGKG…RQEITTHPFF (259 aa). Residues 377 to 385 and Lys-400 each bind ATP; that span reads IGKGSFGKV. Asp-495 (proton acceptor) is an active-site residue. Residues 630-700 form the AGC-kinase C-terminal domain; it reads RNVDWDKAEA…FMNPEFITII (71 aa).

The protein belongs to the protein kinase superfamily. AGC Ser/Thr protein kinase family. PKC subfamily. The cofactor is Ca(2+). Exclusively expressed in photoreceptor cells.

It carries out the reaction L-seryl-[protein] + ATP = O-phospho-L-seryl-[protein] + ADP + H(+). The catalysed reaction is L-threonyl-[protein] + ATP = O-phospho-L-threonyl-[protein] + ADP + H(+). This is a calcium-activated, phospholipid-dependent, serine- and threonine-specific enzyme. This isozyme is a negative regulator of the visual transduction cascade and has been shown to be required for photoreceptor cell inactivation and light adaptation. Negative regulation is dependent on interaction with scaffolding protein inaD. Acts in a hh-signaling pathway which regulates the Duox-dependent gut immune response to bacterial uracil; required for the activation of Cad99C and consequently Cad99C-dependent endosome formation, which is essential for the Duox-dependent production of reactive oxygen species (ROS) in response to intestinal bacterial infection. This chain is Protein kinase C, eye isozyme (inaC), found in Drosophila melanogaster (Fruit fly).